The primary structure comprises 66 residues: Large ribosomal subunit protein uL29 (66 aa).

This sequence belongs to the universal ribosomal protein uL29 family.

This is Large ribosomal subunit protein uL29 from Bacillus licheniformis (strain ATCC 14580 / DSM 13 / JCM 2505 / CCUG 7422 / NBRC 12200 / NCIMB 9375 / NCTC 10341 / NRRL NRS-1264 / Gibson 46).